The chain runs to 657 residues: Methionine--tRNA ligase (657 aa).

The 'HIGH' region signature appears at 13–23 (YYPSGNLHIGH). The 'KMSKS' region signature appears at 308-312 (KMSKS). Lysine 311 is an ATP binding site. A tRNA-binding domain is found at 557 to 657 (DFDKVEIKAA…SAIPNGAVIK (101 aa)).

It belongs to the class-I aminoacyl-tRNA synthetase family. MetG type 2B subfamily. Homodimer.

The protein resides in the cytoplasm. It catalyses the reaction tRNA(Met) + L-methionine + ATP = L-methionyl-tRNA(Met) + AMP + diphosphate. Functionally, is required not only for elongation of protein synthesis but also for the initiation of all mRNA translation through initiator tRNA(fMet) aminoacylation. The polypeptide is Methionine--tRNA ligase (Staphylococcus aureus (strain MW2)).